The sequence spans 509 residues: Transmembrane protein 180 (509 aa).

At 1 to 10 (MGLRLLACLF) the chain is on the extracellular side. Residues 11-42 (HLPTAVIYGSLSLFVSILHNVFLLYYVDTFVS) traverse the membrane as a helical segment. The Cytoplasmic segment spans residues 43 to 54 (VYKIDKLSFWIG). Residues 55–73 (ETVFLIWNSLNDPLFGWLS) traverse the membrane as a helical segment. Residues 74–98 (DRVFLSTQQPGAEISSPEVVLKRLR) are Extracellular-facing. A helical transmembrane segment spans residues 99 to 116 (ALSHNGPLFAISFLAFWV). Residues 117 to 124 (AWAHPGLQ) are Cytoplasmic-facing. The chain crosses the membrane as a helical span at residues 125–149 (FLLCLCMYDSFLTMVDLHHNALLAD). The Extracellular portion of the chain corresponds to 150–153 (LAVS). Residues 154–177 (AKDRTSLNFYCSFFSAIGSLSVFM) traverse the membrane as a helical segment. Topologically, residues 178-189 (SYAVWNKEDFFS) are cytoplasmic. Residues 190–221 (FRIFCIVLAFCSIVGFTLSTQLLRQRFETDGK) form a helical membrane-spanning segment. Over 222–259 (AKWDQESTLKELYIEKLSVPQEKRITLVEYLQQLSRHR) the chain is Extracellular. Residues 260–287 (NFLWFVCMNLIQVFHCHFNSNFFPLFLE) form a helical membrane-spanning segment. The Cytoplasmic segment spans residues 288–300 (HLLSDKISVSTGS). A helical membrane pass occupies residues 301-320 (FLLGISYIAPHLNNLYFLSL). Residues 321 to 325 (CRRWG) are Extracellular-facing. The helical transmembrane segment at 326 to 345 (VYAVVRGLFFLKLALSVVML) threads the bilayer. The Cytoplasmic segment spans residues 346–353 (LAGPDQVY). The helical transmembrane segment at 354-388 (LLCIFIASNRVFTEGTCKLLNLVVTDLVDEDLVLN) threads the bilayer. Topologically, residues 389–397 (RRKQAASAL) are extracellular. The helical transmembrane segment at 398-424 (LFGMVALVTKPGQTFAPLIGTWLLCVY) threads the bilayer. Over 425-458 (TGYDIFQRNPLSNVVSAQPKLESDTILEPTLRQG) the chain is Cytoplasmic. A helical transmembrane segment spans residues 459–477 (CFYLLVFVPITCALLQLLS). The Extracellular portion of the chain corresponds to 478-509 (WTQFSLHGKRLQMVKAQRQGLMQGRAPEIKMI).

Its subcellular location is the cell membrane. The sequence is that of Transmembrane protein 180 from Gallus gallus (Chicken).